The primary structure comprises 526 residues: ATP-dependent RNA helicase dbp8 (526 aa).

A disordered region spans residues 1–77; sequence MTSPVPSEPV…DAKPAAPAGQ (77 aa). The span at 17 to 31 shows a compositional bias: polar residues; sequence SSSGSEVEPSKTSTR. Residues 96 to 124 carry the Q motif motif; that stretch reads SSFAALNVAPWLVGSLTTMAVRKPTAIQK. The Helicase ATP-binding domain occupies 127–306; that stretch reads IPEILKGRDC…NMPRSANKPP (180 aa). 140–147 is an ATP binding site; sequence SRTGSGKT. Positions 249 to 252 match the DEAD box motif; sequence DEAD. The Helicase C-terminal domain occupies 338–485; it reads AFLHVLLSTE…EWSEEGVSIE (148 aa).

Belongs to the DEAD box helicase family. DDX49/DBP8 subfamily.

The protein resides in the nucleus. Its subcellular location is the nucleolus. It carries out the reaction ATP + H2O = ADP + phosphate + H(+). ATP-binding RNA helicase involved in 40S ribosomal subunit biogenesis and is required for the normal formation of 18S rRNAs through pre-rRNA processing at A0, A1 and A2 sites. Required for vegetative growth. This chain is ATP-dependent RNA helicase dbp8 (dbp8), found in Aspergillus fumigatus (strain ATCC MYA-4609 / CBS 101355 / FGSC A1100 / Af293) (Neosartorya fumigata).